Consider the following 451-residue polypeptide: MSIQSGEILETVKMVADQNFDVRTITIGIDLHDCISTDIDVLNQNIYNKITTVGKDLVATAKYLSAKYGVPIVNQRISVTPIAQIAAASKADSYVSVAQTLDKAAKAIGVSFIGGFSALVQKGMSPSDEVLIRSIPEAMKTTDIVCSSINVGSTRAGINMDAVKLAGETIKRTAEITPEGFGCAKIVVFCNAVEDNPFMAGAFHGSGEADAVINVGVSGPGVVKAALENSDATTLTEVAEVVKKTAFKITRVGELIGREASKMLNIPFGILDLSLAPTPAVGDSVARILEEMGLSVCGTHGTTAALALLNDAVKKGGMMASGSVGGLSGAFIPVSEDEGMIAAAEAGVLTLDKLEAMTAVCSVGLDMIAVPGDTPAHTISGIIADEAAIGMINSKTTAVRIIPVTGKTVGDSVEFGGLLGYAPVMPVKEGSCEVFVNRGGRIPAPVQSMKN.

It belongs to the UPF0210 family. In terms of assembly, homodimer.

The sequence is that of UPF0210 protein NMCC_1554 from Neisseria meningitidis serogroup C (strain 053442).